A 229-amino-acid chain; its full sequence is Demethylmenaquinone methyltransferase (229 aa).

S-adenosyl-L-methionine is bound by residues Thr57, Asp77, and 101 to 102 (DV).

The protein belongs to the class I-like SAM-binding methyltransferase superfamily. MenG/UbiE family.

The enzyme catalyses a 2-demethylmenaquinol + S-adenosyl-L-methionine = a menaquinol + S-adenosyl-L-homocysteine + H(+). The protein operates within quinol/quinone metabolism; menaquinone biosynthesis; menaquinol from 1,4-dihydroxy-2-naphthoate: step 2/2. Methyltransferase required for the conversion of demethylmenaquinol (DMKH2) to menaquinol (MKH2). The protein is Demethylmenaquinone methyltransferase of Chlamydia muridarum (strain MoPn / Nigg).